The primary structure comprises 154 residues: Protein-export protein SecB (154 aa).

This sequence belongs to the SecB family. As to quaternary structure, homotetramer, a dimer of dimers. One homotetramer interacts with 1 SecA dimer.

It localises to the cytoplasm. In terms of biological role, one of the proteins required for the normal export of preproteins out of the cell cytoplasm. It is a molecular chaperone that binds to a subset of precursor proteins, maintaining them in a translocation-competent state. It also specifically binds to its receptor SecA. This Vibrio parahaemolyticus serotype O3:K6 (strain RIMD 2210633) protein is Protein-export protein SecB.